We begin with the raw amino-acid sequence, 258 residues long: Global transcriptional regulator CodY (258 aa).

A GAF domain region spans residues 1 to 156 (MSSLLTKTRM…SATIVGMEML (156 aa)). Positions 204–223 (ASKIADKVGITRSVIVNALR) form a DNA-binding region, H-T-H motif.

This sequence belongs to the CodY family.

It localises to the cytoplasm. Functionally, DNA-binding global transcriptional regulator which is involved in the adaptive response to starvation and acts by directly or indirectly controlling the expression of numerous genes in response to nutrient availability. During rapid exponential growth, CodY is highly active and represses genes whose products allow adaptation to nutrient depletion. This chain is Global transcriptional regulator CodY, found in Clostridium beijerinckii (strain ATCC 51743 / NCIMB 8052) (Clostridium acetobutylicum).